We begin with the raw amino-acid sequence, 312 residues long: Malate dehydrogenase (312 aa).

NAD(+) contacts are provided by residues 10-15 (GAGNTG) and aspartate 34. Arginine 85 and arginine 91 together coordinate substrate. Residues asparagine 98 and 121 to 123 (LTN) contribute to the NAD(+) site. Residues asparagine 123 and arginine 154 each contribute to the substrate site. Catalysis depends on histidine 178, which acts as the Proton acceptor.

The protein belongs to the LDH/MDH superfamily. MDH type 3 family.

It carries out the reaction (S)-malate + NAD(+) = oxaloacetate + NADH + H(+). Its function is as follows. Catalyzes the reversible oxidation of malate to oxaloacetate. This Staphylococcus saprophyticus subsp. saprophyticus (strain ATCC 15305 / DSM 20229 / NCIMB 8711 / NCTC 7292 / S-41) protein is Malate dehydrogenase.